Consider the following 243-residue polypeptide: MNVFKRCSGYIRLSNETRARFPFAAMSYVNVTLCAFGAVVAGYLSAANTFVELQFLQYWLMLSLFVTGLINATLFLRQGKTEAHEIVYELKMLHAMYFANALVNHGLLATERSAVSAVLVANLVHCCALVLLFVELTVLLGHALGTYSDYRYAKACYMLALFVSAAVAVITVGASGMKSAPLCDNLLVAVVLSIAYLLVAIVWAARKEAAGPNLQRVQVVPFNDPPPSFASVEMDLLNAKILK.

This is an uncharacterized protein from Orgyia pseudotsugata multicapsid polyhedrosis virus (OpMNPV).